The following is a 31-amino-acid chain: Cytochrome b6-f complex subunit 6 (31 aa).

The chain crosses the membrane as a helical span at residues 4-24 (ITSYFGFLLVVLTITSALFIG).

This sequence belongs to the PetL family. As to quaternary structure, the 4 large subunits of the cytochrome b6-f complex are cytochrome b6, subunit IV (17 kDa polypeptide, PetD), cytochrome f and the Rieske protein, while the 4 small subunits are PetG, PetL, PetM and PetN. The complex functions as a dimer.

It is found in the plastid. It localises to the chloroplast thylakoid membrane. In terms of biological role, component of the cytochrome b6-f complex, which mediates electron transfer between photosystem II (PSII) and photosystem I (PSI), cyclic electron flow around PSI, and state transitions. PetL is important for photoautotrophic growth as well as for electron transfer efficiency and stability of the cytochrome b6-f complex. The sequence is that of Cytochrome b6-f complex subunit 6 from Jasminum nudiflorum (Winter jasmine).